Here is a 426-residue protein sequence, read N- to C-terminus: Enolase (426 aa).

(2R)-2-phosphoglycerate is bound at residue Gln-163. Residue Glu-205 is the Proton donor of the active site. Residues Asp-242, Glu-285, and Asp-312 each coordinate Mg(2+). Positions 337, 366, 367, and 388 each coordinate (2R)-2-phosphoglycerate. Catalysis depends on Lys-337, which acts as the Proton acceptor.

Belongs to the enolase family. It depends on Mg(2+) as a cofactor.

Its subcellular location is the cytoplasm. It localises to the secreted. The protein resides in the cell surface. It carries out the reaction (2R)-2-phosphoglycerate = phosphoenolpyruvate + H2O. The protein operates within carbohydrate degradation; glycolysis; pyruvate from D-glyceraldehyde 3-phosphate: step 4/5. Catalyzes the reversible conversion of 2-phosphoglycerate (2-PG) into phosphoenolpyruvate (PEP). It is essential for the degradation of carbohydrates via glycolysis. This is Enolase from Rhodospirillum centenum (strain ATCC 51521 / SW).